The chain runs to 142 residues: Large ribosomal subunit protein uL13 (142 aa).

This sequence belongs to the universal ribosomal protein uL13 family. Part of the 50S ribosomal subunit.

Functionally, this protein is one of the early assembly proteins of the 50S ribosomal subunit, although it is not seen to bind rRNA by itself. It is important during the early stages of 50S assembly. This chain is Large ribosomal subunit protein uL13, found in Akkermansia muciniphila (strain ATCC BAA-835 / DSM 22959 / JCM 33894 / BCRC 81048 / CCUG 64013 / CIP 107961 / Muc).